The chain runs to 640 residues: Chaperone protein DnaK (640 aa).

Thr199 carries the phosphothreonine; by autocatalysis modification. The disordered stretch occupies residues 603–640; sequence YAAGETESSAAEPGEPQEKTVDAEVVDAEFEEVKDDKK. The segment covering 626-640 has biased composition (acidic residues); it reads EVVDAEFEEVKDDKK.

It belongs to the heat shock protein 70 family.

In terms of biological role, acts as a chaperone. The protein is Chaperone protein DnaK of Methylobacillus flagellatus (strain ATCC 51484 / DSM 6875 / VKM B-1610 / KT).